We begin with the raw amino-acid sequence, 254 residues long: Pimeloyl-[acyl-carrier protein] methyl ester esterase (254 aa).

An AB hydrolase-1 domain is found at 16–242; sequence LVLIHGWGMN…ASHAPFISHP (227 aa). Substrate-binding positions include Trp-22, 82–83, and 143–147; these read SL and FLALQ. Catalysis depends on Ser-82, which acts as the Nucleophile. Residues Asp-207 and His-235 contribute to the active site. His-235 contributes to the substrate binding site.

This sequence belongs to the AB hydrolase superfamily. Carboxylesterase BioH family. As to quaternary structure, monomer.

It is found in the cytoplasm. It carries out the reaction 6-carboxyhexanoyl-[ACP] methyl ester + H2O = 6-carboxyhexanoyl-[ACP] + methanol + H(+). Its pathway is cofactor biosynthesis; biotin biosynthesis. Functionally, the physiological role of BioH is to remove the methyl group introduced by BioC when the pimeloyl moiety is complete. It allows to synthesize pimeloyl-ACP via the fatty acid synthetic pathway through the hydrolysis of the ester bonds of pimeloyl-ACP esters. The sequence is that of Pimeloyl-[acyl-carrier protein] methyl ester esterase from Photobacterium profundum (strain SS9).